The following is a 493-amino-acid chain: Sodium-coupled neutral amino acid symporter 2 (493 aa).

The Cytoplasmic segment spans residues 1–72 (MNNAEVLNVA…LPGTTSFGMS (72 aa)). The tract at residues 1–92 (MNNAEVLNVA…SGILGLSYAM (92 aa)) is regulates protein turnover upon amino acid deprivation. Residues 73–92 (VFNLSNAIVGSGILGLSYAM) traverse the membrane as a helical segment. Asn78 is a Na(+) binding site. Residues 93–98 (ANTGIA) lie on the Extracellular side of the membrane. Residues 99 to 119 (LFMILLVFVTVFSLYSIHLLL) traverse the membrane as a helical segment. The Cytoplasmic portion of the chain corresponds to 120–154 (KTANEGGSLLYEQLGLKAFGIPGKLAASGSVTLQN). Residues 155–173 (IGAMSSYLYIVKYELPLVI) traverse the membrane as a helical segment. The Extracellular portion of the chain corresponds to 174 to 184 (KALMDIKESNG). Residues 185-205 (EWYLNGDYLVIMVSLAIILPL) form a helical membrane-spanning segment. Residues 206–213 (SLLRNLGY) lie on the Cytoplasmic side of the membrane. Residues 214 to 234 (LGYTSGFSPLCMVFFLIVVIY) form a helical membrane-spanning segment. Topologically, residues 235–279 (KKFEIPCPLEAMNMTSNSSSHDHMAHNETDDEMCKPKYFVFNSQT) are extracellular. Cys241 and Cys268 form a disulfide bridge. N-linked (GlcNAc...) asparagine glycans are attached at residues Asn247, Asn251, and Asn261. A helical transmembrane segment spans residues 280–300 (VYAVPILTFSFVCHPAVLPIY). The Cytoplasmic portion of the chain corresponds to 301–316 (QELKGRSRRRMMNVSN). A helical transmembrane segment spans residues 317–337 (VSFFAMFIMYLLAALFGYLTF). Over 338–358 (YSKVEPELLHTYSKVFGAGVI) the chain is Extracellular. A helical membrane pass occupies residues 359–379 (FVVVRLAVLMAVTLTVPIVIF). Thr373 is a binding site for Na(+). The Cytoplasmic segment spans residues 380–400 (PIRSSLNELFCSGKDFAWIRH). Residues 401–421 (ILITFLILAFTNVLVIFVPTI) traverse the membrane as a helical segment. At 422 to 423 (RD) the chain is on the extracellular side. The chain crosses the membrane as a helical span at residues 424–444 (IFGFIGASAAAMLVFILPSAF). At 445–459 (YIRLVKKESMKSVQK) the chain is on the cytoplasmic side. The chain crosses the membrane as a helical span at residues 460-482 (IGALLFLIGGIIVMIGSMTLIIL). The Extracellular segment spans residues 483 to 493 (DWIHNSTSGGN).

The protein belongs to the amino acid/polyamine transporter 2 family.

The protein localises to the cell membrane. It catalyses the reaction L-alanine(in) + Na(+)(in) = L-alanine(out) + Na(+)(out). The enzyme catalyses glycine(in) + Na(+)(in) = glycine(out) + Na(+)(out). The catalysed reaction is L-serine(in) + Na(+)(in) = L-serine(out) + Na(+)(out). It carries out the reaction L-proline(in) + Na(+)(in) = L-proline(out) + Na(+)(out). It catalyses the reaction L-methionine(in) + Na(+)(in) = L-methionine(out) + Na(+)(out). The enzyme catalyses L-histidine(in) + Na(+)(in) = L-histidine(out) + Na(+)(out). The catalysed reaction is L-asparagine(in) + Na(+)(in) = L-asparagine(out) + Na(+)(out). It carries out the reaction L-glutamine(in) + Na(+)(in) = L-glutamine(out) + Na(+)(out). It catalyses the reaction L-threonine(in) + Na(+)(in) = L-threonine(out) + Na(+)(out). The enzyme catalyses L-leucine(in) + Na(+)(in) = L-leucine(out) + Na(+)(out). The catalysed reaction is L-phenylalanine(in) + Na(+)(in) = L-phenylalanine(out) + Na(+)(out). Inhibited by N-methyl-D-glucamine. Inhibited by choline. Allosteric regulation of sodium ions binding by pH. Its function is as follows. Symporter that cotransports neutral amino acids and sodium ions from the extracellular to the intracellular side of the cell membrane. The transport is pH-sensitive, Li(+)-intolerant, electrogenic, driven by the Na(+) electrochemical gradient and cotransports of neutral amino acids and sodium ions with a stoichiometry of 1:1. This is Sodium-coupled neutral amino acid symporter 2 from Xenopus tropicalis (Western clawed frog).